The following is a 153-amino-acid chain: Endoribonuclease YbeY (153 aa).

Residues histidine 116, histidine 120, and histidine 126 each coordinate Zn(2+).

The protein belongs to the endoribonuclease YbeY family. Requires Zn(2+) as cofactor.

The protein localises to the cytoplasm. In terms of biological role, single strand-specific metallo-endoribonuclease involved in late-stage 70S ribosome quality control and in maturation of the 3' terminus of the 16S rRNA. This Clavibacter michiganensis subsp. michiganensis (strain NCPPB 382) protein is Endoribonuclease YbeY.